Consider the following 245-residue polypeptide: 1-(5-phosphoribosyl)-5-[(5-phosphoribosylamino)methylideneamino] imidazole-4-carboxamide isomerase (245 aa).

Residue D8 is the Proton acceptor of the active site. Residue D129 is the Proton donor of the active site.

Belongs to the HisA/HisF family.

The protein localises to the cytoplasm. It catalyses the reaction 1-(5-phospho-beta-D-ribosyl)-5-[(5-phospho-beta-D-ribosylamino)methylideneamino]imidazole-4-carboxamide = 5-[(5-phospho-1-deoxy-D-ribulos-1-ylimino)methylamino]-1-(5-phospho-beta-D-ribosyl)imidazole-4-carboxamide. It functions in the pathway amino-acid biosynthesis; L-histidine biosynthesis; L-histidine from 5-phospho-alpha-D-ribose 1-diphosphate: step 4/9. The chain is 1-(5-phosphoribosyl)-5-[(5-phosphoribosylamino)methylideneamino] imidazole-4-carboxamide isomerase from Trichlorobacter lovleyi (strain ATCC BAA-1151 / DSM 17278 / SZ) (Geobacter lovleyi).